Consider the following 548-residue polypeptide: (2S)-methylsuccinyl-CoA dehydrogenase (548 aa).

FAD contacts are provided by residues alanine 282 to serine 291 and tryptophan 315 to threonine 317. Serine 291 contributes to the substrate binding site. Glutamate 409–arginine 412 is a substrate binding site. FAD contacts are provided by residues arginine 437 and glutamine 505–glycine 509. The active-site Proton acceptor is glutamate 532. Alanine 534–glutamate 536 contributes to the FAD binding site.

Belongs to the acyl-CoA dehydrogenase family. Homodimer. It depends on FAD as a cofactor.

It carries out the reaction (2S)-methylsuccinyl-CoA + oxidized [electron-transfer flavoprotein] + H(+) = 2-methylfumaryl-CoA + reduced [electron-transfer flavoprotein]. Functionally, involved in the ethylmalonyl-CoA pathway, a new acetyl-CoA assimilation strategy that operates in a number of bacteria and replaces the glyoxylate cycle. Catalyzes the oxidation of (2S)-methylsuccinyl-CoA to yield mesaconyl-(C1)-CoA. Highly specific for (S)-methylsuccinyl-CoA. This chain is (2S)-methylsuccinyl-CoA dehydrogenase, found in Cereibacter sphaeroides (Rhodobacter sphaeroides).